We begin with the raw amino-acid sequence, 300 residues long: GTPase Era (300 aa).

In terms of domain architecture, Era-type G spans 5–176; sequence HSGFVCLVGR…IDVLAAALPA (172 aa). The tract at residues 13–20 is G1; sequence GRPNTGKS. 13-20 is a binding site for GTP; it reads GRPNTGKS. The tract at residues 39 to 43 is G2; the sequence is QTTRH. The interval 60 to 63 is G3; the sequence is DTPG. Residues 60 to 64 and 125 to 128 contribute to the GTP site; these read DTPGL and TKID. Residues 125-128 form a G4 region; it reads TKID. Residues 155–157 are G5; sequence VSA. The KH type-2 domain occupies 207–286; it reads VRDELPHSLA…YLDLRVKVAK (80 aa).

It belongs to the TRAFAC class TrmE-Era-EngA-EngB-Septin-like GTPase superfamily. Era GTPase family. As to quaternary structure, monomer.

The protein resides in the cell envelope. The protein localises to the secreted. It is found in the cell wall. Exhibits GTPase activity. Binds RNA but is probably not involved in ribosome assembly in mycobacteria. The sequence is that of GTPase Era from Mycobacterium bovis (strain ATCC BAA-935 / AF2122/97).